A 167-amino-acid chain; its full sequence is Protein YfbM (167 aa).

As to quaternary structure, monomer.

This Escherichia coli (strain K12) protein is Protein YfbM (yfbM).